The chain runs to 455 residues: Eukaryotic translation initiation factor 3 subunit E (455 aa).

Positions 256 to 425 (TDLFFSPAYI…GTVIMNHPPQ (170 aa)) constitute a PCI domain.

This sequence belongs to the eIF-3 subunit E family. In terms of assembly, component of the eukaryotic translation initiation factor 3 (eIF-3) complex.

It is found in the cytoplasm. Component of the eukaryotic translation initiation factor 3 (eIF-3) complex, which is involved in protein synthesis of a specialized repertoire of mRNAs and, together with other initiation factors, stimulates binding of mRNA and methionyl-tRNAi to the 40S ribosome. The eIF-3 complex specifically targets and initiates translation of a subset of mRNAs involved in cell proliferation. The protein is Eukaryotic translation initiation factor 3 subunit E (int6) of Neosartorya fischeri (strain ATCC 1020 / DSM 3700 / CBS 544.65 / FGSC A1164 / JCM 1740 / NRRL 181 / WB 181) (Aspergillus fischerianus).